Here is a 1118-residue protein sequence, read N- to C-terminus: Phytochrome 1 (1118 aa).

The span at 1-10 (MSSTRHSYSS) shows a compositional bias: low complexity. The tract at residues 1–23 (MSSTRHSYSSGGSGKSKHGRRIA) is disordered. Residues 212 to 391 (DIGLLCDSVV…VFSLQLNMEV (180 aa)) enclose the GAF domain. Cys317 contributes to the phytochromobilin binding site. 2 consecutive PAS domains span residues 606–677 (VASE…LEGE) and 740–811 (DYKA…TKLM). A Histidine kinase domain is found at 887–1110 (YVKEELKKPL…LVTIQFPLAH (224 aa)).

The protein belongs to the phytochrome family. Homodimer. Contains one covalently linked phytochromobilin chromophore.

In terms of biological role, regulatory photoreceptor which exists in two forms that are reversibly interconvertible by light: the Pr form that absorbs maximally in the red region of the spectrum and the Pfr form that absorbs maximally in the far-red region. Photoconversion of Pr to Pfr induces an array of morphogenic responses, whereas reconversion of Pfr to Pr cancels the induction of those responses. Pfr controls the expression of a number of nuclear genes including those encoding the small subunit of ribulose-bisphosphate carboxylase, chlorophyll A/B binding protein, protochlorophyllide reductase, rRNA, etc. It also controls the expression of its own gene(s) in a negative feedback fashion. In Adiantum capillus-veneris (Maidenhair fern), this protein is Phytochrome 1 (PHY1).